We begin with the raw amino-acid sequence, 483 residues long: Inositol-pentakisphosphate 2-kinase (483 aa).

Positions 140-144 (EIKPK) match the EXKPK motif motif. The interval 279–298 (SNRSGEPRKMHLSESKPHCE) is disordered. Residues 281 to 297 (RSGEPRKMHLSESKPHC) show a composition bias toward basic and acidic residues.

This sequence belongs to the IPK1 type 2 family. As to expression, expressed both maternally and zygotically. Expressed in cleavage-stage embryos. Ubiquitously distributed throughout blastula stages of embryogenesis. At the onset of gastrulation, it is enriched in cells around the blastoderm margin. At shield stage, expression is detected in the deep involuted cells that contribute to mesendoderm. During mid and late gastrula stages, it is strongly expressed in axial mesendoderm. However, it is not present in the nascent tailbud at yolk plug closure (YPC) stage. Expression in axial mesendoderm is reduced at the 2 somite stage (SS). At 6 SS, it is expressed in cells surrounding Kupffer's vesicle, but apparently not within. By 10 SS, it is no longer detected as a specific signal above background.

It is found in the cytoplasm. Its subcellular location is the nucleus. The catalysed reaction is 1D-myo-inositol 1,3,4,5,6-pentakisphosphate + ATP = 1D-myo-inositol hexakisphosphate + ADP + H(+). In terms of biological role, phosphorylates Ins(1,3,4,5,6)P5 at position 2 to form Ins(1,2,3,4,5,6)P6 (InsP6 or phytate). InsP6 is involved in many processes such as mRNA export, non-homologous end-joining, endocytosis and ion channel regulation. InsP6 also acts as a key regulator of left-right asymmetry in embryo, probably by regulating asymmetric Ca(2+) during left-right specification. The chain is Inositol-pentakisphosphate 2-kinase (ippk) from Danio rerio (Zebrafish).